Reading from the N-terminus, the 812-residue chain is Probable beta-glucosidase D (812 aa).

The signal sequence occupies residues 1–18 (MRVPSLSVLSFLLGTALA). N53 and N188 each carry an N-linked (GlcNAc...) asparagine glycan. The segment at 186–248 (ETNRTGGMGG…GMGGGMAGSS (63 aa)) is disordered. Residues 191-207 (GGMGGGGGAPGGGGMGR) show a composition bias toward gly residues. The segment covering 211-225 (FSSSVPGGMSPTSSA) has biased composition (polar residues). The span at 236-245 (GGSGMGGGMA) shows a compositional bias: gly residues. N296 carries N-linked (GlcNAc...) asparagine glycosylation. The active site involves D324. N-linked (GlcNAc...) asparagine glycosylation is found at N360, N384, N422, N501, N592, and N646.

This sequence belongs to the glycosyl hydrolase 3 family.

It is found in the secreted. It catalyses the reaction Hydrolysis of terminal, non-reducing beta-D-glucosyl residues with release of beta-D-glucose.. The protein operates within glycan metabolism; cellulose degradation. Functionally, beta-glucosidases are one of a number of cellulolytic enzymes involved in the degradation of cellulosic biomass. Catalyzes the last step releasing glucose from the inhibitory cellobiose. The protein is Probable beta-glucosidase D (bglD) of Emericella nidulans (strain FGSC A4 / ATCC 38163 / CBS 112.46 / NRRL 194 / M139) (Aspergillus nidulans).